A 526-amino-acid polypeptide reads, in one-letter code: Probable DNA ligase (526 aa).

Residue Glu228 coordinates ATP. Lys230 (N6-AMP-lysine intermediate) is an active-site residue. Positions 235, 250, 279, 319, 391, and 397 each coordinate ATP.

It belongs to the ATP-dependent DNA ligase family. The cofactor is Mg(2+).

The enzyme catalyses ATP + (deoxyribonucleotide)n-3'-hydroxyl + 5'-phospho-(deoxyribonucleotide)m = (deoxyribonucleotide)n+m + AMP + diphosphate.. In terms of biological role, DNA ligase that seals nicks in double-stranded DNA during DNA replication, DNA recombination and DNA repair. This chain is Probable DNA ligase, found in Mycobacterium avium (strain 104).